Consider the following 981-residue polypeptide: Protein deadlock (981 aa).

The required for interaction with rhi/rhino stretch occupies residues 1-60 (MEKLDKIRMSQKLSCWQHILTTLGTSSKTEQEWNTFFKGFLESWRKPYCIQTSCDPSIPL). 6 disordered regions span residues 72–195 (LQEN…ACAP), 274–307 (IMDK…DDQL), 327–352 (SRNE…NKKE), 375–446 (LRKS…PNNI), 554–586 (GLDD…ETLK), and 642–662 (LVHQ…TAAR). Polar residues-rich tracts occupy residues 104–113 (PSKSHSTGST) and 150–160 (NHTTSIFSKAQ). Positions 167–191 (KLSSTKKRPDTCAPTDDSRKNREPR) are enriched in basic and acidic residues. Residues 337–352 (EKVKLKGERPAQNKKE) show a composition bias toward basic and acidic residues. The segment covering 377 to 390 (KSVKKSAKQQKPRV) has biased composition (basic residues). The segment covering 409 to 419 (TQDKQSTHEMI) has biased composition (basic and acidic residues). Over residues 422–446 (QAKTISEASGQQTSQVQSSLSPNNI) the composition is skewed to polar residues. The span at 652–662 (RNQRDEATAAR) shows a compositional bias: basic and acidic residues.

In terms of assembly, component of the Rhino-Deadlock-Cutoff (RDC) complex, composed of rhi/rhino, del/deadlock and cuff/cutoff. Interacts (via N-terminus) with rhi/rhino (via C-terminus); this interaction is direct. Interacts (via C-terminus) with cuff/cutoff; this interaction is direct.

The protein localises to the nucleus. Its subcellular location is the cytoplasm. It localises to the cytoskeleton. It is found in the microtubule organizing center. The protein resides in the centrosome. The protein localises to the chromosome. Its function is as follows. Developmental protein involved in oogenesis. Required for germline maintenance, stability of mitotic spindles, localization of patterning determinants, oocyte growth and fusome biogenesis in males and females. Also required for dorso-ventral and antero-posterior patterning of oocyte and eggshell. May be involved in microtubule function during oogenesis. Part of a rhi-dependent transcription machinery that enables the generation of piRNA precursors from heterochromatin while maintaining the suppression of transposon-encoded promoters and enhancers. Component of the RDC complex (rhi, del and cuff) which binds to repressive H3K9me3 marks in the piRNA clusters. RDC promotes the bidirectional transcription of piRNA clusters at these sites by interacting with Moonshiner which forms a complex with the transcription initiation factors TfIIA-S and Trf2. This mechanism allows transcription to occur in piRNA clusters despite the lack of proper promoter elements and in the presence of the repressive H3K9me3 mark. As part of the RDC complex, involved in suppression of splicing. The protein is Protein deadlock (del) of Drosophila melanogaster (Fruit fly).